Reading from the N-terminus, the 369-residue chain is MYALLLRVMFLVPPERIHHLAFAAMRVAARFAPTRALVRRLAVVDDPILHSTVFGVPFRAPLGLAAGFDKNAEGVDVWGPFGWGFAEIGTVTAQAQPGNPAPRLFRLPADRALINRMGFNNHGAARAAEQLRARTATVPIGANIGKTKVVEPAGAAADYATSAALLGPLADFVVVNVSSPNTPGLRDLQAVESLRPLLRTVLETVADGGRRVPVLVKIAPDLSDEDIDAVADLAVELGLAGIVATNTTIRRDGLHTDPEDVAAMGAGGLSGAPVADRSLEVLRRLYRRVGDRLALISVGGIETPEQAYQRVLAGASLLQGYTGFIYGGPFWTRKIHRGLAELLRRDGYTSLTEAVGAEHRGPRPQADTA.

FMN is bound by residues 66 to 70 (AGFDK) and Thr90. Position 70 (Lys70) interacts with substrate. Residue 115–119 (NRMGF) coordinates substrate. FMN contacts are provided by Asn143 and Asn176. Asn176 lines the substrate pocket. Ser179 functions as the Nucleophile in the catalytic mechanism. Asn181 contacts substrate. Positions 217 and 245 each coordinate FMN. Substrate is bound at residue 246–247 (NT). Residues Gly271, Gly300, and 321 to 322 (YT) each bind FMN.

This sequence belongs to the dihydroorotate dehydrogenase family. Type 2 subfamily. In terms of assembly, monomer. It depends on FMN as a cofactor.

It localises to the cell membrane. It catalyses the reaction (S)-dihydroorotate + a quinone = orotate + a quinol. It functions in the pathway pyrimidine metabolism; UMP biosynthesis via de novo pathway; orotate from (S)-dihydroorotate (quinone route): step 1/1. Its function is as follows. Catalyzes the conversion of dihydroorotate to orotate with quinone as electron acceptor. The sequence is that of Dihydroorotate dehydrogenase (quinone) from Nocardia farcinica (strain IFM 10152).